Here is a 314-residue protein sequence, read N- to C-terminus: Taste receptor type 2 member 42 (314 aa).

At 1-7 (MATEMDK) the chain is on the extracellular side. A helical transmembrane segment spans residues 8–28 (IFLTLATVEFIIGMLGNVFIG). The Cytoplasmic segment spans residues 29–50 (LVNCSEGIKNQKVFSVDFILTC). A helical transmembrane segment spans residues 51 to 71 (LAISTIGHLLVILFDSCVVGL). Residues 72 to 101 (APHLYATDRVRRPVTMLWHMXNHLTTWLAT) are Extracellular-facing. Residues 102-122 (CLSIFYFFKIAHFPHSLFLWL) form a helical membrane-spanning segment. Residues 123 to 127 (RWRMN) lie on the Cytoplasmic side of the membrane. The chain crosses the membrane as a helical span at residues 128–148 (RVIAILLTLSLFLLIFDCLVL). Residues 149-187 (EMFIDXSLNIIDKSNLTLYLDESKTPYDKLSLLKILLSL) are Extracellular-facing. Asn-163 carries N-linked (GlcNAc...) asparagine glycosylation. A helical membrane pass occupies residues 188-208 (NSFIPFSLCLTSLLFLFLSLV). At 209 to 238 (RHTRNLKLSSLGSRDSSTEAHRRAMKMVMS) the chain is on the cytoplasmic side. Residues 239–259 (LLFLFIVHFFSLQVANWTFCI) traverse the membrane as a helical segment. The Extracellular portion of the chain corresponds to 260–265 (LGNNKY). A helical transmembrane segment spans residues 266–286 (TQFVTLALHAFPSCHSFILIL). Topologically, residues 287 to 314 (GNSKLRQTAVRLLWHLRNYTKRPNPLPL) are cytoplasmic.

It belongs to the G-protein coupled receptor T2R family.

It is found in the membrane. In terms of biological role, receptor that may play a role in the perception of bitterness and is gustducin-linked. May play a role in sensing the chemical composition of the gastrointestinal content. The activity of this receptor may stimulate alpha gustducin, mediate PLC-beta-2 activation and lead to the gating of TRPM5. The polypeptide is Taste receptor type 2 member 42 (TAS2R42) (Macaca mulatta (Rhesus macaque)).